The following is a 613-amino-acid chain: Dihydroxy-acid dehydratase (613 aa).

D81 serves as a coordination point for Mg(2+). Position 122 (C122) interacts with [2Fe-2S] cluster. Mg(2+)-binding residues include D123 and K124. K124 carries the N6-carboxylysine modification. A [2Fe-2S] cluster-binding site is contributed by C193. Residue E489 coordinates Mg(2+). S515 serves as the catalytic Proton acceptor.

This sequence belongs to the IlvD/Edd family. As to quaternary structure, homodimer. The cofactor is [2Fe-2S] cluster. Mg(2+) serves as cofactor.

It catalyses the reaction (2R)-2,3-dihydroxy-3-methylbutanoate = 3-methyl-2-oxobutanoate + H2O. The enzyme catalyses (2R,3R)-2,3-dihydroxy-3-methylpentanoate = (S)-3-methyl-2-oxopentanoate + H2O. It functions in the pathway amino-acid biosynthesis; L-isoleucine biosynthesis; L-isoleucine from 2-oxobutanoate: step 3/4. It participates in amino-acid biosynthesis; L-valine biosynthesis; L-valine from pyruvate: step 3/4. Its function is as follows. Functions in the biosynthesis of branched-chain amino acids. Catalyzes the dehydration of (2R,3R)-2,3-dihydroxy-3-methylpentanoate (2,3-dihydroxy-3-methylvalerate) into 2-oxo-3-methylpentanoate (2-oxo-3-methylvalerate) and of (2R)-2,3-dihydroxy-3-methylbutanoate (2,3-dihydroxyisovalerate) into 2-oxo-3-methylbutanoate (2-oxoisovalerate), the penultimate precursor to L-isoleucine and L-valine, respectively. In Pseudomonas putida (strain ATCC 47054 / DSM 6125 / CFBP 8728 / NCIMB 11950 / KT2440), this protein is Dihydroxy-acid dehydratase.